The chain runs to 725 residues: IML2-like protein YKR018C (725 aa).

At threonine 196 the chain carries Phosphothreonine. A phosphoserine mark is found at serine 246, serine 377, and serine 380.

Belongs to the IML2 family.

It localises to the cytoplasm. The protein resides in the nucleus. The sequence is that of IML2-like protein YKR018C from Saccharomyces cerevisiae (strain ATCC 204508 / S288c) (Baker's yeast).